A 1133-amino-acid chain; its full sequence is Myb-binding protein 1A (1133 aa).

Disordered regions lie at residues 1-62 (MKSK…ENTA), 718-764 (PLSK…DAES), 924-943 (GEEH…SRQA), and 1111-1133 (KKVA…EEST). Composition is skewed to basic and acidic residues over residues 20–35 (KAKE…KSEA) and 50–60 (EKPAETEEKEN). Acidic residues-rich tracts occupy residues 725-735 (GEEESDDELDK) and 744-762 (DDSE…EDDA).

This sequence belongs to the MYBBP1A family. As to quaternary structure, interacts with nclb.

It localises to the cytoplasm. The protein localises to the nucleus. It is found in the nucleolus. Functionally, has a role in rRNA biogenesis, cell proliferation and tissue growth by contributing to the localization of nclb to the nucleolus. This chain is Myb-binding protein 1A, found in Drosophila melanogaster (Fruit fly).